Here is a 305-residue protein sequence, read N- to C-terminus: Tetraspanin-12 (305 aa).

The Cytoplasmic segment spans residues 1 to 12 (MAREDSVKCLRC). 2 S-palmitoyl cysteine lipidation sites follow: Cys-9 and Cys-12. A helical membrane pass occupies residues 13–33 (LLYALNLLFWLMSISVLAVSA). Over 34 to 59 (WMRDYLNNVLTLTAETRVEEAVILTY) the chain is Extracellular. A helical transmembrane segment spans residues 60–80 (FPVVHPVMIAVCCFLIIVGML). The Cytoplasmic portion of the chain corresponds to 81–89 (GYCGTVKRN). Residue Cys-83 is the site of S-palmitoyl cysteine attachment. Residues 90 to 110 (LLLLAWYFGTLLVIFCVELAC) form a helical membrane-spanning segment. At 111 to 224 (GVWTYEQEVM…RGTKQLQVLR (114 aa)) the chain is on the extracellular side. The chain crosses the membrane as a helical span at residues 225-245 (FLGISIGVTQILAMILTITLL). At 246–305 (WALYYDRREPGTDQMLSLKNDTSQHLSCHSVELLKPSLSRIFEHTSMANSFNTHFEMEEL) the chain is on the cytoplasmic side.

This sequence belongs to the tetraspanin (TM4SF) family. In terms of assembly, interacts (when palmitoylated) with ADAM10. Interacts with MMP14/MT1-MMP. Component of a complex, at least composed of TSPAN12, FZD4 and norrin (NDP). In terms of processing, palmitoylated; required for interaction with ADAM10. Expressed in the neonatal retinal vasculature but not other retinal tissues. Also detected in the neonatal meningeal vasculature and in nonvascular cell types, such as the smooth muscle cells in the neonatal intestine.

It is found in the cell membrane. Its function is as follows. Regulator of cell surface receptor signal transduction. Acts as a regulator of membrane proteinases such as ADAM10 and MMP14/MT1-MMP. Activates ADAM10-dependent cleavage activity of amyloid precursor protein (APP). Activates MMP14/MT1-MMP-dependent cleavage activity. Plays a central role in retinal vascularization by regulating norrin (NDP) signal transduction. Acts in concert with norrin (NDP) to promote FZD4 multimerization and subsequent activation of FZD4, leading to promote accumulation of beta-catenin (CTNNB1) and stimulate LEF/TCF-mediated transcriptional programs. Suprisingly, it only activate the norrin (NDP)-dependent activation of FZD4, while it does not activate the Wnt-dependent activation of FZD4, suggesting the existence of a Wnt-independent signaling that also promote accumulation the beta-catenin (CTNNB1). The protein is Tetraspanin-12 (Tspan12) of Mus musculus (Mouse).